The chain runs to 469 residues: MTPKDVLQIIKEKEVRYVDLRFADTRGKEQHVTVPASTIDEAAFEEGKMFDGSSIAGWKGINESDMILMPDASTAVMDPFFDDPTLILRCDIVEPATMQGYERDPRSIAKRAEAYMKSTGIADTALFGPENEFFIFDDVRWGANMSGSFYKVDSEEAGWNSEKVYEDGNIGHRPGVKGGYFPVPPVDSFQDLRSAMCNTLEDMGMVVEVHHHEVATAGQCEIGVRCNTLVKKADEVLLLKYAVQNVAHAYGKTATFMPKPLVGDNGNGMHVHQSLAKDGKNLFSGDLYGGLSETALHYIGGIIKHAKALNAFCNASTNSYKRLVPGFEAPVMLAYSARNRSASIRIPYVMNPKARRIEVRFPDSTANPYLAFAAMLMAGLDGIQNKIHPGDAMDKDLYDLPPEEEKAIPQVCYSFDQALEALDKDREFLTRGGVFTDDMIDAYLDLKGQEVTRLRMSTHPVEFDMYYSL.

Positions 13-97 constitute a GS beta-grasp domain; the sequence is KEVRYVDLRF…LRCDIVEPAT (85 aa). The GS catalytic domain maps to 105-469; that stretch reads PRSIAKRAEA…PVEFDMYYSL (365 aa). E130 and E132 together coordinate Mg(2+). ATP is bound at residue E208. Mg(2+) is bound by residues E213 and E221. L-glutamate-binding positions include 265–266 and G266; that span reads NG. Residue H270 coordinates Mg(2+). ATP is bound by residues 272–274 and S274; that span reads HQS. 3 residues coordinate L-glutamate: R322, E328, and R340. ATP-binding residues include R340, R345, and K353. E358 provides a ligand contact to Mg(2+). An L-glutamate-binding site is contributed by R360. At Y398 the chain carries O-AMP-tyrosine.

The protein belongs to the glutamine synthetase family. In terms of assembly, oligomer of 12 subunits arranged in the form of two hexameric ring. The cofactor is Mg(2+).

The protein localises to the cytoplasm. The catalysed reaction is L-glutamate + NH4(+) + ATP = L-glutamine + ADP + phosphate + H(+). With respect to regulation, the activity of this enzyme could be controlled by adenylation under conditions of abundant glutamine. In terms of biological role, catalyzes the ATP-dependent biosynthesis of glutamine from glutamate and ammonia. This Methylococcus capsulatus (strain ATCC 33009 / NCIMB 11132 / Bath) protein is Glutamine synthetase.